We begin with the raw amino-acid sequence, 531 residues long: Peptide chain release factor 3 (531 aa).

The tr-type G domain maps to 10–278 (RRRRTFAIIS…SLIDWAPAPK (269 aa)). GTP-binding positions include 19–26 (SHPDAGKT), 87–91 (DTPGH), and 141–144 (NKYD).

This sequence belongs to the TRAFAC class translation factor GTPase superfamily. Classic translation factor GTPase family. PrfC subfamily.

Its subcellular location is the cytoplasm. Increases the formation of ribosomal termination complexes and stimulates activities of RF-1 and RF-2. It binds guanine nucleotides and has strong preference for UGA stop codons. It may interact directly with the ribosome. The stimulation of RF-1 and RF-2 is significantly reduced by GTP and GDP, but not by GMP. The protein is Peptide chain release factor 3 of Neisseria meningitidis serogroup B (strain ATCC BAA-335 / MC58).